The chain runs to 258 residues: 14-3-3 protein homolog (258 aa).

Belongs to the 14-3-3 family.

The sequence is that of 14-3-3 protein homolog from Encephalitozoon cuniculi (strain GB-M1) (Microsporidian parasite).